A 571-amino-acid chain; its full sequence is MSFKMTQNQYTSLYGPTVGDSIRLGDTNLFAQIEKDYAVYGEEATFGGGKSIRDGMAQNPRVTRDDVNVADLVISNAVIIDYDKVVKADIGIKNGYIFAIGNAGNPDIMDNVDIIIGSTTDIIAAEGKIVTAGGIDTHVHFINPEQAEVALESGITTHIGGGTGASEGSKATTVTPGPWHIHRMLEAAEGLPINVGFTGKGQATNPTALIEQINAGAIGLKVHEDWGATPSALSHALDVADEFDVQIALHADTLNEAGFMEDTMAAVKDRVLHMYHTEGAGGGHTPDLIKSAAFSNILPSSTNPTLPYTHNTVDEHLDMVMITHHLNAAIPEDIAFADSRIRKETIAAEDVLQDMGVFSMISSDSQAMGRVGEVITRTWQVAHRMKEQRGPLDGDFEHNDNNRIKRYIAKYTINPAITHGISEYVGSIEPGKLADIVLWDPIFFGVKPELVVKGGLINSAVNGDANGSIPTSEPMKYRKMYGQYGGNLTSTSMTFVSKTAYENGINRALNLKRMVRPVKNIRQLSKADMKNNSATPKLDVDPQTYEVYVDGEKITSNAATELPLTQRYFLF.

In terms of domain architecture, Urease spans 133 to 571 (GGIDTHVHFI…LPLTQRYFLF (439 aa)). Positions 138, 140, and 221 each coordinate Ni(2+). Lys221 carries the post-translational modification N6-carboxylysine. His223 provides a ligand contact to substrate. Residues His250 and His276 each coordinate Ni(2+). Catalysis depends on His324, which acts as the Proton donor. Asp364 is a binding site for Ni(2+).

This sequence belongs to the metallo-dependent hydrolases superfamily. Urease alpha subunit family. Heterotrimer of UreA (gamma), UreB (beta) and UreC (alpha) subunits. Three heterotrimers associate to form the active enzyme. Ni cation is required as a cofactor. In terms of processing, carboxylation allows a single lysine to coordinate two nickel ions.

The protein resides in the cytoplasm. It catalyses the reaction urea + 2 H2O + H(+) = hydrogencarbonate + 2 NH4(+). Its pathway is nitrogen metabolism; urea degradation; CO(2) and NH(3) from urea (urease route): step 1/1. This Staphylococcus aureus (strain bovine RF122 / ET3-1) protein is Urease subunit alpha.